Reading from the N-terminus, the 226-residue chain is MNENLFTSFITPTMMGLPIVILVIVFPAMLYPSPNRLINNRLISIQQWLVQLILKQMLLIHNSKGRTWALMLISLILFIGSTNLLGLVPYTFTPTTQLSMNLGMAIPLWAGAVITGFRHKAKASLAHFLPQGTPITLIPMLVVIETISLFIQPMALAIRLTANITAGHLLMHLIGGAVLALTSISPAAATITFIILLLLTILEFAVALIQAYVFTLLVSLYLHDNT.

6 helical membrane passes run 9-29 (FITP…FPAM), 68-88 (WALM…LGLV), 97-117 (QLSM…ITGF), 138-158 (IPML…ALAI), 164-184 (ITAG…LTSI), and 201-223 (ILEF…LYLH).

The protein belongs to the ATPase A chain family. As to quaternary structure, component of the ATP synthase complex composed at least of ATP5F1A/subunit alpha, ATP5F1B/subunit beta, ATP5MC1/subunit c (homooctomer), MT-ATP6/subunit a, MT-ATP8/subunit 8, ATP5ME/subunit e, ATP5MF/subunit f, ATP5MG/subunit g, ATP5MK/subunit k, ATP5MJ/subunit j, ATP5F1C/subunit gamma, ATP5F1D/subunit delta, ATP5F1E/subunit epsilon, ATP5PF/subunit F6, ATP5PB/subunit b, ATP5PD/subunit d, ATP5PO/subunit OSCP. ATP synthase complex consists of a soluble F(1) head domain (subunits alpha(3) and beta(3)) - the catalytic core - and a membrane F(0) domain - the membrane proton channel (subunits c, a, 8, e, f, g, k and j). These two domains are linked by a central stalk (subunits gamma, delta, and epsilon) rotating inside the F1 region and a stationary peripheral stalk (subunits F6, b, d, and OSCP). Interacts with DNAJC30; interaction is direct.

The protein resides in the mitochondrion inner membrane. It carries out the reaction H(+)(in) = H(+)(out). Subunit a, of the mitochondrial membrane ATP synthase complex (F(1)F(0) ATP synthase or Complex V) that produces ATP from ADP in the presence of a proton gradient across the membrane which is generated by electron transport complexes of the respiratory chain. ATP synthase complex consist of a soluble F(1) head domain - the catalytic core - and a membrane F(1) domain - the membrane proton channel. These two domains are linked by a central stalk rotating inside the F(1) region and a stationary peripheral stalk. During catalysis, ATP synthesis in the catalytic domain of F(1) is coupled via a rotary mechanism of the central stalk subunits to proton translocation. With the subunit c (ATP5MC1), forms the proton-conducting channel in the F(0) domain, that contains two crucial half-channels (inlet and outlet) that facilitate proton movement from the mitochondrial intermembrane space (IMS) into the matrix. Protons are taken up via the inlet half-channel and released through the outlet half-channel, following a Grotthuss mechanism. This chain is ATP synthase F(0) complex subunit a, found in Dugong dugon (Dugong).